The sequence spans 389 residues: uncharacterized protein (389 aa).

The N-terminal stretch at 1–23 is a signal peptide; sequence MHFAKLGAIGLLGSIICAYAASA.

The protein belongs to the IUNH family.

The protein localises to the endoplasmic reticulum lumen. This is an uncharacterized protein from Schizosaccharomyces pombe (strain 972 / ATCC 24843) (Fission yeast).